We begin with the raw amino-acid sequence, 120 residues long: Large ribosomal subunit protein bL19 (120 aa).

This sequence belongs to the bacterial ribosomal protein bL19 family.

Functionally, this protein is located at the 30S-50S ribosomal subunit interface and may play a role in the structure and function of the aminoacyl-tRNA binding site. The protein is Large ribosomal subunit protein bL19 of Chlorobium chlorochromatii (strain CaD3).